A 436-amino-acid chain; its full sequence is Fasciclin-like arabinogalactan protein 15 (436 aa).

An N-terminal signal peptide occupies residues 1–20 (MDDLSKLLFFLLLTISITTA). FAS1 domains lie at 31–165 (NSNS…ERLL) and 249–392 (VKDF…DGVL). Residues Asn68 and Asn271 are each glycosylated (N-linked (GlcNAc...) asparagine).

Belongs to the fasciclin-like AGP family.

It localises to the secreted. Functionally, may be a cell surface adhesion protein. The polypeptide is Fasciclin-like arabinogalactan protein 15 (FLA15) (Arabidopsis thaliana (Mouse-ear cress)).